The sequence spans 197 residues: MIASVRGVVQLIGQDQVVIDVHGVGLAIAVPRTVLATIGAIGDTAQLYTHLHVREDMLALFGFSSPAQRALFELLLGVSGIGPKVALALLSAATPEELQHAIAREDITMLSKVPGIGKKTAARLVLELKGKFGVATISPQLSTNPGLLALNTELIDILTSLGYSTTEAQAALNALPADAPADTEERLRLALQYFGGV.

Residues 1–64 (MIASVRGVVQ…EDMLALFGFS (64 aa)) form a domain I region. Residues 65-143 (SPAQRALFEL…VATISPQLST (79 aa)) are domain II. Residues 144-153 (NPGLLALNTE) are flexible linker. A domain III region spans residues 153 to 197 (ELIDILTSLGYSTTEAQAALNALPADAPADTEERLRLALQYFGGV).

The protein belongs to the RuvA family. As to quaternary structure, homotetramer. Forms an RuvA(8)-RuvB(12)-Holliday junction (HJ) complex. HJ DNA is sandwiched between 2 RuvA tetramers; dsDNA enters through RuvA and exits via RuvB. An RuvB hexamer assembles on each DNA strand where it exits the tetramer. Each RuvB hexamer is contacted by two RuvA subunits (via domain III) on 2 adjacent RuvB subunits; this complex drives branch migration. In the full resolvosome a probable DNA-RuvA(4)-RuvB(12)-RuvC(2) complex forms which resolves the HJ.

Its subcellular location is the cytoplasm. The RuvA-RuvB-RuvC complex processes Holliday junction (HJ) DNA during genetic recombination and DNA repair, while the RuvA-RuvB complex plays an important role in the rescue of blocked DNA replication forks via replication fork reversal (RFR). RuvA specifically binds to HJ cruciform DNA, conferring on it an open structure. The RuvB hexamer acts as an ATP-dependent pump, pulling dsDNA into and through the RuvAB complex. HJ branch migration allows RuvC to scan DNA until it finds its consensus sequence, where it cleaves and resolves the cruciform DNA. The protein is Holliday junction branch migration complex subunit RuvA of Herpetosiphon aurantiacus (strain ATCC 23779 / DSM 785 / 114-95).